The following is a 139-amino-acid chain: Large ribosomal subunit protein uL16c (139 aa).

The protein belongs to the universal ribosomal protein uL16 family. As to quaternary structure, part of the 50S ribosomal subunit.

It is found in the plastid. It localises to the chloroplast. The polypeptide is Large ribosomal subunit protein uL16c (Cryptomeria japonica (Japanese cedar)).